We begin with the raw amino-acid sequence, 151 residues long: Small ribosomal subunit protein uS15 (151 aa).

Residues S21 and S32 each carry the phosphoserine modification.

The protein belongs to the universal ribosomal protein uS15 family. As to quaternary structure, component of the small ribosomal subunit (SSU). Mature yeast ribosomes consist of a small (40S) and a large (60S) subunit. The 40S small subunit contains 1 molecule of ribosomal RNA (18S rRNA) and at least 33 different proteins. The large 60S subunit contains 3 rRNA molecules (25S, 5.8S and 5S rRNA) and at least 46 different proteins.

It is found in the cytoplasm. Functionally, component of the ribosome, a large ribonucleoprotein complex responsible for the synthesis of proteins in the cell. The small ribosomal subunit (SSU) binds messenger RNAs (mRNAs) and translates the encoded message by selecting cognate aminoacyl-transfer RNA (tRNA) molecules. The large subunit (LSU) contains the ribosomal catalytic site termed the peptidyl transferase center (PTC), which catalyzes the formation of peptide bonds, thereby polymerizing the amino acids delivered by tRNAs into a polypeptide chain. The nascent polypeptides leave the ribosome through a tunnel in the LSU and interact with protein factors that function in enzymatic processing, targeting, and the membrane insertion of nascent chains at the exit of the ribosomal tunnel. The sequence is that of Small ribosomal subunit protein uS15 (rps13) from Schizosaccharomyces pombe (strain 972 / ATCC 24843) (Fission yeast).